An 88-amino-acid polypeptide reads, in one-letter code: uncharacterized protein (88 aa).

Transmembrane regions (helical) follow at residues 8 to 28 (IFLSFFSPIYLSLLLNGSIFF) and 45 to 65 (ELLRCQICLCSLFWMVTVINL).

The protein resides in the membrane. This is an uncharacterized protein from Saccharomyces cerevisiae (strain ATCC 204508 / S288c) (Baker's yeast).